We begin with the raw amino-acid sequence, 102 residues long: Small ribosomal subunit protein uS10 (102 aa).

The protein belongs to the universal ribosomal protein uS10 family. As to quaternary structure, part of the 30S ribosomal subunit.

Involved in the binding of tRNA to the ribosomes. This chain is Small ribosomal subunit protein uS10, found in Salinispora tropica (strain ATCC BAA-916 / DSM 44818 / JCM 13857 / NBRC 105044 / CNB-440).